Consider the following 227-residue polypeptide: Cytochrome c oxidase subunit 2 (227 aa).

The Mitochondrial intermembrane portion of the chain corresponds to 1–22; sequence MAYPFQLGLQDATSPIMEELMN. Residues 23–44 form a helical membrane-spanning segment; that stretch reads FHDHTLMIVFLISSLVLYIISL. Over 45–60 the chain is Mitochondrial matrix; sequence MLTTKLTHTSTMDAQE. Residues 61–81 form a helical membrane-spanning segment; that stretch reads VETIWTILPAVILIMIALPSL. Residues 82–227 are Mitochondrial intermembrane-facing; that stretch reads RILYMMDEIN…YFENWSASMI (146 aa). Residues histidine 161, cysteine 196, glutamate 198, cysteine 200, histidine 204, and methionine 207 each contribute to the Cu cation site. Glutamate 198 contacts Mg(2+). Residue tyrosine 218 is modified to Phosphotyrosine.

It belongs to the cytochrome c oxidase subunit 2 family. Component of the cytochrome c oxidase (complex IV, CIV), a multisubunit enzyme composed of 14 subunits. The complex is composed of a catalytic core of 3 subunits MT-CO1, MT-CO2 and MT-CO3, encoded in the mitochondrial DNA, and 11 supernumerary subunits COX4I, COX5A, COX5B, COX6A, COX6B, COX6C, COX7A, COX7B, COX7C, COX8 and NDUFA4, which are encoded in the nuclear genome. The complex exists as a monomer or a dimer and forms supercomplexes (SCs) in the inner mitochondrial membrane with NADH-ubiquinone oxidoreductase (complex I, CI) and ubiquinol-cytochrome c oxidoreductase (cytochrome b-c1 complex, complex III, CIII), resulting in different assemblies (supercomplex SCI(1)III(2)IV(1) and megacomplex MCI(2)III(2)IV(2)). Found in a complex with TMEM177, COA6, COX18, COX20, SCO1 and SCO2. Interacts with TMEM177 in a COX20-dependent manner. Interacts with COX20. Interacts with COX16. Cu cation serves as cofactor.

It localises to the mitochondrion inner membrane. It catalyses the reaction 4 Fe(II)-[cytochrome c] + O2 + 8 H(+)(in) = 4 Fe(III)-[cytochrome c] + 2 H2O + 4 H(+)(out). Component of the cytochrome c oxidase, the last enzyme in the mitochondrial electron transport chain which drives oxidative phosphorylation. The respiratory chain contains 3 multisubunit complexes succinate dehydrogenase (complex II, CII), ubiquinol-cytochrome c oxidoreductase (cytochrome b-c1 complex, complex III, CIII) and cytochrome c oxidase (complex IV, CIV), that cooperate to transfer electrons derived from NADH and succinate to molecular oxygen, creating an electrochemical gradient over the inner membrane that drives transmembrane transport and the ATP synthase. Cytochrome c oxidase is the component of the respiratory chain that catalyzes the reduction of oxygen to water. Electrons originating from reduced cytochrome c in the intermembrane space (IMS) are transferred via the dinuclear copper A center (CU(A)) of subunit 2 and heme A of subunit 1 to the active site in subunit 1, a binuclear center (BNC) formed by heme A3 and copper B (CU(B)). The BNC reduces molecular oxygen to 2 water molecules using 4 electrons from cytochrome c in the IMS and 4 protons from the mitochondrial matrix. This chain is Cytochrome c oxidase subunit 2 (Mtco2), found in Mus musculus (Mouse).